The primary structure comprises 168 residues: ATP synthase subunit b (168 aa).

A helical membrane pass occupies residues 10–30 (STILGNFILVTASFAVLIILI).

It belongs to the ATPase B chain family. In terms of assembly, F-type ATPases have 2 components, F(1) - the catalytic core - and F(0) - the membrane proton channel. F(1) has five subunits: alpha(3), beta(3), gamma(1), delta(1), epsilon(1). F(0) has three main subunits: a(1), b(2) and c(10-14). The alpha and beta chains form an alternating ring which encloses part of the gamma chain. F(1) is attached to F(0) by a central stalk formed by the gamma and epsilon chains, while a peripheral stalk is formed by the delta and b chains.

The protein resides in the cell membrane. Functionally, f(1)F(0) ATP synthase produces ATP from ADP in the presence of a proton or sodium gradient. F-type ATPases consist of two structural domains, F(1) containing the extramembraneous catalytic core and F(0) containing the membrane proton channel, linked together by a central stalk and a peripheral stalk. During catalysis, ATP synthesis in the catalytic domain of F(1) is coupled via a rotary mechanism of the central stalk subunits to proton translocation. Component of the F(0) channel, it forms part of the peripheral stalk, linking F(1) to F(0). The polypeptide is ATP synthase subunit b (Streptococcus suis (strain 98HAH33)).